Consider the following 370-residue polypeptide: Acyl-CoA:lysophosphatidylglycerol acyltransferase 1 (370 aa).

A helical membrane pass occupies residues 22–42 (FAFMVANNLVAIPSYICYVII). The short motif at 101 to 106 (HQATGD) is the HXXXXD motif element. A helical membrane pass occupies residues 342-362 (MWIFLIQSFAFLSGYLWYHII).

The protein belongs to the 1-acyl-sn-glycerol-3-phosphate acyltransferase family. In terms of tissue distribution, ubiquitous. Expressed in heart, kidney, liver, skin, intestine, and thymus. Highest expression is detected in brain and testis.

It localises to the endoplasmic reticulum membrane. It carries out the reaction a 2-acyl-sn-glycero-3-phosphoethanolamine + octadecanoyl-CoA = 1-octadecanoyl-2-acyl-sn-glycero-3-phosphoethanolamine + CoA. It catalyses the reaction 2-(9Z-octadecenoyl)-sn-glycero-3-phosphoethanolamine + octadecanoyl-CoA = 1-octadecanoyl-2-(9Z-octadecenoyl)-sn-glycero-3-phosphoethanolamine + CoA. The enzyme catalyses a 2-acyl-sn-glycero-3-phosphoethanolamine + hexadecanoyl-CoA = 1-hexadecanoyl-2-acyl-sn-glycero-3-phosphoethanolamine + CoA. The catalysed reaction is 2-(9Z-octadecenoyl)-sn-glycero-3-phosphoethanolamine + hexadecanoyl-CoA = 1-hexadecanoyl-2-(9Z-octadecenoyl)-sn-glycero-3-phosphoethanolamine + CoA. It carries out the reaction 1-tetradecanoyl-sn-glycero-3-phospho-(1'-sn-glycerol) + hexadecanoyl-CoA = 1-tetradecanoyl-2-hexadecanoyl-sn-glycero-3-phospho-(1'-sn-glycerol) + CoA. It catalyses the reaction 1-hexadecanoyl-sn-glycero-3-phospho-(1'-sn-glycerol) + dodecanoyl-CoA = 1-hexadecanoyl-2-dodecanoyl-sn-glycero-3-phospho-(1'-sn-glycerol) + CoA. The enzyme catalyses 1-hexadecanoyl-sn-glycero-3-phospho-(1'-sn-glycerol) + hexadecanoyl-CoA = 1,2-dihexadecanoyl-sn-glycero-3-phospho-(1'-sn-glycerol) + CoA. The catalysed reaction is 1-hexadecanoyl-sn-glycero-3-phospho-(1'-sn-glycerol) + octadecanoyl-CoA = 1-hexadecanoyl-2-octadecanoyl-sn-glycero-3-phospho-(1'-sn-glycerol) + CoA. It carries out the reaction 1-octadecanoyl-sn-glycero-3-phospho-(1'-sn-glycerol) + hexadecanoyl-CoA = 1-octadecanoyl-2-hexadecanoyl-sn-glycero-3-phospho-(1'-sn-glycerol) + CoA. It catalyses the reaction 1-(9Z-octadecenoyl)-sn-glycero-3-phospho-(1'-sn-glycerol) + dodecanoyl-CoA = 1-(9Z-octadecenoyl)-2-dodecanoyl-sn-glycero-3-phospho-(1'-sn-glycerol) + CoA. The enzyme catalyses 1-hexadecanoyl-sn-glycero-3-phospho-(1'-sn-glycerol) + (9Z)-octadecenoyl-CoA = 1-hexadecanoyl-2-(9Z-octadecenoyl)-sn-glycero-3-phospho-(1'-sn-glycerol) + CoA. The catalysed reaction is 1-(9Z-octadecenoyl)-sn-glycero-3-phospho-(1'-sn-glycerol) + hexadecanoyl-CoA = 1-(9Z-octadecenoyl)-2-hexadecanoyl-sn-glycero-3-phospho-(1'-sn-glycerol) + CoA. It carries out the reaction 1-(9Z-octadecenoyl)-sn-glycero-3-phospho-(1'-sn-glycerol) + (9Z)-octadecenoyl-CoA = 1,2-di-(9Z-octadecenoyl)-sn-glycero-3-phospho-(1'-sn-glycerol) + CoA. It catalyses the reaction a 2-acylglycerol + an acyl-CoA = a 1,2-diacylglycerol + CoA. The enzyme catalyses a 2-acylglycerol + hexadecanoyl-CoA = a 1-hexadecanoyl-2-acylglycerol + CoA. The catalysed reaction is a 1-acylglycerol + hexadecanoyl-CoA = an hexadecanoyl-acylglycerol + CoA. It carries out the reaction a 2-acyl-sn-glycero-3-phosphocholine + an acyl-CoA = a 1,2-diacyl-sn-glycero-3-phosphocholine + CoA. It catalyses the reaction 2-(9Z-octadecenoyl)-sn-glycero-3-phosphocholine + octadecanoyl-CoA = 1-octadecanoyl-2-(9Z-octadecenoyl)-sn-glycero-3-phosphocholine + CoA. The enzyme catalyses 2-(9Z,12Z-octadecadienoyl)-sn-glycero-3-phosphocholine + octadecanoyl-CoA = 1-octadecanoyl-2-(9Z,12Z)-octadecadienoyl-sn-glycero-3-phosphocholine + CoA. The catalysed reaction is 2-(5Z,8Z,11Z,14Z)-eicosatetraenoyl-sn-glycero-3-phosphocholine + octadecanoyl-CoA = 1-octadecanoyl-2-(5Z,8Z,11Z,14Z-eicosatetraenoyl)-sn-glycero-3-phosphocholine + CoA. It carries out the reaction 2-(9Z-octadecenoyl)-sn-glycero-3-phosphocholine + hexadecanoyl-CoA = 1-hexadecanoyl-2-(9Z-octadecenoyl)-sn-glycero-3-phosphocholine + CoA. It catalyses the reaction 2-(9Z-octadecenoyl)-sn-glycero-3-phospho-L-serine + hexadecanoyl-CoA = 1-hexadecanoyl-2-(9Z-octadecenoyl)-sn-glycero-3-phospho-L-serine + CoA. The enzyme catalyses 2-(4Z,7Z,10Z,13Z,16Z,19Z-docosahexaenoyl)-sn-glycero-3-phosphocholine + octadecanoyl-CoA = 1-octadecanoyl-2-(4Z,7Z,10Z,13Z,16Z,19Z-docosahexaenoyl)-sn-glycero-3-phosphocholine + CoA. The catalysed reaction is 1-(9Z-octadecenoyl)-sn-glycero-3-phospho-L-serine + octadecanoyl-CoA = 1-(9Z-octadecenoyl)-2-octadecanoyl-sn-glycero-3-phospho-L-serine + CoA. It carries out the reaction a 2-acyl-sn-glycero-3-phosphoethanolamine + a fatty acyl-CoA = a 1,2-diacyl-sn-glycero-3-phosphoethanolamine + CoA. In terms of biological role, lysophospholipid acyltransferase involved in fatty acyl chain remodeling of glycerophospholipids in the endoplasmic reticulum membrane. Selectively catalyzes the transfer and esterification of saturated long-chain fatty acids from acyl-CoA to the sn-1 position of 1-lyso-2-acyl phosphatidylethanolamines (1-lyso-PE, LPE), with a preference for stearoyl CoA over palmitoyl CoA as acyl donor. Acts in concert with an unknown phospholipase A1 to convert palmitate PE species into stearate ones. Provides substrates to the PE methylation pathway, controlling stearate/palmitate composition of PE and phosphatidylcholine (PC) species with an overall impact on de novo hepatic lipid synthesis, body fat content and life span. Can acylate lysophosphatidylglycerols (LPG) using various saturated fatty acyl-CoAs as acyl donors. Can also acylate monoacylglycerols with a preference for 2-monoacylglycerols over 1-monoacylglycerols. Has no activity toward lysophosphatidic acids (LPA) and lysophosphatidylcholines (LPC). In Mus musculus (Mouse), this protein is Acyl-CoA:lysophosphatidylglycerol acyltransferase 1.